A 172-amino-acid chain; its full sequence is Envelope protein UL45 (172 aa).

The Intravirion portion of the chain corresponds to 1–27 (MPLRASEHAYRPLGPGTPPMRARLPAA). Residues 28–48 (AWVGVGTIIGGVVIIAALVLV) traverse the membrane as a helical; Signal-anchor for type II membrane protein segment. At 49–172 (PSRASWALSP…TSTRNALGLP (124 aa)) the chain is on the virion surface side.

It belongs to the herpesviridae HHV-1 UL45 family.

Its subcellular location is the virion membrane. Important virulence factor of HSV neurotropism. Seems to be required for glycoprotein B-induced fusion. Dispensable for growth in vitro. The polypeptide is Envelope protein UL45 (Human herpesvirus 1 (strain KOS) (HHV-1)).